The following is a 122-amino-acid chain: Semaphorin-like protein A43 (122 aa).

One can recognise a Sema domain in the interval 1 to 122 (MIYLYTADNV…RIMYLFYEYH (122 aa)).

It belongs to the semaphorin family.

This Homo sapiens (Human) protein is Semaphorin-like protein A43 (A43R).